Consider the following 318-residue polypeptide: Olfactory receptor-like protein COR1 (318 aa).

Topologically, residues 1 to 26 (MASGNCTTPTTFILSGLTDNPGLQMP) are extracellular. N5 is a glycosylation site (N-linked (GlcNAc...) asparagine). The helical transmembrane segment at 27–49 (LFMVFLAIYTITLLTNLGLIALI) threads the bilayer. The Cytoplasmic segment spans residues 50-57 (SVDLHLQT). A helical membrane pass occupies residues 58-79 (PMYIFLQNLSFTDAAYSTVITP). At 80–100 (KMLATFLEERKTISYVGCILQ) the chain is on the extracellular side. A disulfide bridge connects residues C97 and C179. Residues 101–120 (YFSFVLLTVTESLLLAVMAY) traverse the membrane as a helical segment. At 121 to 139 (DRYVAICKPLLYPSIMTKA) the chain is on the cytoplasmic side. A helical transmembrane segment spans residues 140–164 (VCWRLVESLYFLAFLNSLVHTSGLL). Over 165–205 (KLSFCYSNVVNHFFCDISPLFQISSSSIAISELLVIISGSL) the chain is Extracellular. The chain crosses the membrane as a helical span at residues 206–226 (FVMSSIIIILISYVFIILTVV). Residues 227–239 (MIRSKDGKYKAFS) lie on the Cytoplasmic side of the membrane. Residues 240 to 260 (TCTSHLMAVSLFHGTVIFMYL) form a helical membrane-spanning segment. Residues 261–271 (RPVKLFSLDTD) are Extracellular-facing. Residues 272-292 (KIASLFYTVVIPMLNPLIYSW) form a helical membrane-spanning segment. The Cytoplasmic portion of the chain corresponds to 293–318 (RNKEVKDALRRLTATTFGFIDSKAVQ).

The protein belongs to the G-protein coupled receptor 1 family.

The protein localises to the cell membrane. Functionally, odorant receptor. This is Olfactory receptor-like protein COR1 (COR1) from Gallus gallus (Chicken).